Here is an 88-residue protein sequence, read N- to C-terminus: MPKNSPIRSSLILKERRRSVESQIYHLTDRILRLTHHLELHRRDYSSQRGLWQILGKRKRLLVYLSKRNRPRYEDLIGQLSIRGLKIR.

The protein belongs to the universal ribosomal protein uS15 family. Part of the 30S ribosomal subunit.

The protein resides in the plastid. It localises to the chloroplast. In Cycas taitungensis (Prince sago), this protein is Small ribosomal subunit protein uS15c (rps15).